Consider the following 916-residue polypeptide: Protein translocase subunit SecA (916 aa).

Residues glutamine 87, 105–109 (GEGKT), and aspartate 507 contribute to the ATP site. The Zn(2+) site is built by cysteine 900, cysteine 902, cysteine 911, and histidine 912.

The protein belongs to the SecA family. Monomer and homodimer. Part of the essential Sec protein translocation apparatus which comprises SecA, SecYEG and auxiliary proteins SecDF-YajC and YidC. Zn(2+) is required as a cofactor.

It localises to the cell inner membrane. It is found in the cytoplasm. The catalysed reaction is ATP + H2O + cellular proteinSide 1 = ADP + phosphate + cellular proteinSide 2.. Functionally, part of the Sec protein translocase complex. Interacts with the SecYEG preprotein conducting channel. Has a central role in coupling the hydrolysis of ATP to the transfer of proteins into and across the cell membrane, serving both as a receptor for the preprotein-SecB complex and as an ATP-driven molecular motor driving the stepwise translocation of polypeptide chains across the membrane. The sequence is that of Protein translocase subunit SecA from Neisseria gonorrhoeae (strain ATCC 700825 / FA 1090).